The following is a 201-amino-acid chain: dITP/XTP pyrophosphatase (201 aa).

9 to 14 is a substrate binding site; that stretch reads SNNAGK. Mg(2+)-binding residues include glutamate 41 and aspartate 70. The Proton acceptor role is filled by aspartate 70. Substrate-binding positions include serine 71, 155–158, lysine 178, and 183–184; these read FGYD and HR.

It belongs to the HAM1 NTPase family. In terms of assembly, homodimer. It depends on Mg(2+) as a cofactor.

The catalysed reaction is XTP + H2O = XMP + diphosphate + H(+). It catalyses the reaction dITP + H2O = dIMP + diphosphate + H(+). The enzyme catalyses ITP + H2O = IMP + diphosphate + H(+). Pyrophosphatase that catalyzes the hydrolysis of nucleoside triphosphates to their monophosphate derivatives, with a high preference for the non-canonical purine nucleotides XTP (xanthosine triphosphate), dITP (deoxyinosine triphosphate) and ITP. Seems to function as a house-cleaning enzyme that removes non-canonical purine nucleotides from the nucleotide pool, thus preventing their incorporation into DNA/RNA and avoiding chromosomal lesions. The chain is dITP/XTP pyrophosphatase from Methylococcus capsulatus (strain ATCC 33009 / NCIMB 11132 / Bath).